Reading from the N-terminus, the 411-residue chain is Thyroid hormone receptor beta (411 aa).

A disordered region spans residues 1-24 (MTPNSMTENGLPAWDKPKPCPDGE). Residues 1-104 (MTPNSMTENG…IPSYLDKDEL (104 aa)) form a modulating region. Residues 15–24 (DKPKPCPDGE) show a composition bias toward basic and acidic residues. Residues Cys-105, Cys-108, Cys-122, Cys-125, Cys-143, Cys-149, Cys-159, and Cys-162 each contribute to the Zn(2+) site. NR C4-type zinc fingers lie at residues 105–125 (CVVC…CEGC) and 143–167 (CKYE…FKKC). The segment at residues 105 to 179 (CVVCGDKATG…VGMATDLVLD (75 aa)) is a DNA-binding region (nuclear receptor). The NR LBD domain maps to 215 to 411 (QEWELIKTVT…EHYINYRRNS (197 aa)). The segment at 242–411 (KFLPEDIGQA…EHYINYRRNS (170 aa)) is interaction with NR2F6. 3,3',5-triiodo-L-thyronine is bound by residues Arg-280 and Asn-329. 2 residues coordinate L-thyroxine: Arg-280 and Asn-329.

It belongs to the nuclear hormone receptor family. NR1 subfamily. Binds DNA as a dimer; homodimer and heterodimer with RXRA. Interacts with the coactivators NCOA1/SRC1, NCOA2/GRIP1, NCOA7 and MED1/TRAP220 in a ligand-inducible manner. Interacts with the corepressor NCOR1 in absence of ligand. Interacts with C1D. Interacts with NR2F6; the interaction impairs the binding of the THRB homodimer and THRB:RXRB heterodimer to T3 response elements. Interacts with PRMT2 and THRSP. Interacts with TACC1; this interaction is decreased in the presence of thyroid hormone T3.

The protein resides in the nucleus. Nuclear hormone receptor that can act as a repressor or activator of transcription. High affinity receptor for thyroid hormones, including triiodothyronine and thyroxine. The protein is Thyroid hormone receptor beta (THRB) of Ovis aries (Sheep).